The chain runs to 633 residues: MRIATAVYLYSLYPDESKKGANSRQIFRALGDESLDPSTIDAYLERLYDEIATHIFRAEGTDRYYFKTEENPRALVRYAAKDVKDEEVKLHLQKQLVGKIIPSTDVVAVNIFEKEIKRDNTDPGKLNLFVIDYEEVFRIYAHLKRSKEYESEAEDVVAREAFSRIFSQMLSITAPNRNSVVLLFPVAGGIPSFMSDVKELIACEKLKKERSKDKEFLKELKAIQERIYAKTAQKLINLYSYAGFFRKNDQVIGQLSPLTYDEKAKYTERIFEELERKWGKVLSSASEDYIYGVMGKEKDYIKLSELINTIANSTGYPFVPAKYLKGSIKELVKAGEIAVYRGEICDPEEVDLRKSEEIVKSLKLGIELGEIRDSDYVVKKEFAEELLGAAKRKRADEAANRILEVLGDRNYAEISSIESELPDLSRKDIVDAVKRSQRLELYGGDISLIRKVEEGAELSESEKEEILSGFNAEHGEFIFKKEYAEGIKNKIRTVEWEPPEISEDEERKGEEIKVSDLIERFEDFEGRRVKRIKVKGSGSNSLKEDALNLGGAVPFLNLKGKIAVDLKGRVFFKCSSELEKAGIIEEILRKIAELDSNPEYSVELEIDAEVNDDFRIFAEQLTSTKSEKTLVVE.

This is an uncharacterized protein from Archaeoglobus fulgidus (strain ATCC 49558 / DSM 4304 / JCM 9628 / NBRC 100126 / VC-16).